A 250-amino-acid polypeptide reads, in one-letter code: MQVTVRDLDGDDAGTLDLPRVFEEPVRPDLVKRAVLAAQANRTQEYGADEYAGLRTTAESQGSGRGMAHVPKANGQGARVPQTVGGRKAHPPKAEKDHGLDVNDKERKAAVRAAVAATTDSELVADRGHNFDDDVEFPLVVSDDFEDLVKTQDVVSLLEALGVHADIERADEGRTVRAGQGTLRGRKYQEPTSILFVTASESGPSTAARNLAGVDVATGREVNAEDLAPGAEPGRLTVWTESAVEEVAQR.

Disordered regions lie at residues 1 to 20 and 51 to 101; these read MQVT…DLPR and YAGL…HGLD. The segment covering 92 to 101 has biased composition (basic and acidic residues); the sequence is PKAEKDHGLD.

The protein belongs to the universal ribosomal protein uL4 family. Part of the 50S ribosomal subunit.

Functionally, one of the primary rRNA binding proteins, this protein initially binds near the 5'-end of the 23S rRNA. It is important during the early stages of 50S assembly. It makes multiple contacts with different domains of the 23S rRNA in the assembled 50S subunit and ribosome. Forms part of the polypeptide exit tunnel. The chain is Large ribosomal subunit protein uL4 from Halobacterium salinarum (strain ATCC 29341 / DSM 671 / R1).